The primary structure comprises 165 residues: Growth arrest and DNA damage-inducible protein GADD45 alpha (165 aa).

T2 bears the Phosphothreonine mark.

Belongs to the GADD45 family. As to quaternary structure, interacts with AURKA, PCNA, GADD45GIP1 and MAPK14.

Its subcellular location is the nucleus. Functionally, might affect PCNA interaction with some CDK (cell division protein kinase) complexes; stimulates DNA excision repair in vitro and inhibits entry of cells into S phase. In T-cells, functions as a regulator of p38 MAPKs by inhibiting p88 phosphorylation and activity. This chain is Growth arrest and DNA damage-inducible protein GADD45 alpha (GADD45A), found in Bos taurus (Bovine).